The chain runs to 135 residues: Aspartate 1-decarboxylase (135 aa).

The active-site Schiff-base intermediate with substrate; via pyruvic acid is the serine 25. Pyruvic acid (Ser) is present on serine 25. Threonine 57 serves as a coordination point for substrate. The Proton donor role is filled by tyrosine 58. 73–75 (GAA) lines the substrate pocket.

It belongs to the PanD family. Heterooctamer of four alpha and four beta subunits. Pyruvate is required as a cofactor. Post-translationally, is synthesized initially as an inactive proenzyme, which is activated by self-cleavage at a specific serine bond to produce a beta-subunit with a hydroxyl group at its C-terminus and an alpha-subunit with a pyruvoyl group at its N-terminus.

Its subcellular location is the cytoplasm. It catalyses the reaction L-aspartate + H(+) = beta-alanine + CO2. It functions in the pathway cofactor biosynthesis; (R)-pantothenate biosynthesis; beta-alanine from L-aspartate: step 1/1. In terms of biological role, catalyzes the pyruvoyl-dependent decarboxylation of aspartate to produce beta-alanine. This Mycolicibacterium vanbaalenii (strain DSM 7251 / JCM 13017 / BCRC 16820 / KCTC 9966 / NRRL B-24157 / PYR-1) (Mycobacterium vanbaalenii) protein is Aspartate 1-decarboxylase.